Consider the following 394-residue polypeptide: Elongation factor Tu (394 aa).

The tr-type G domain occupies 10 to 204 (KPHVNVGTIG…ALDSYIPEPE (195 aa)). The interval 19–26 (GHVDHGKT) is G1. 19 to 26 (GHVDHGKT) provides a ligand contact to GTP. Position 26 (threonine 26) interacts with Mg(2+). The interval 60-64 (GITIS) is G2. Positions 81–84 (DCPG) are G3. GTP-binding positions include 81–85 (DCPGH) and 136–139 (NKCD). A G4 region spans residues 136 to 139 (NKCD). The G5 stretch occupies residues 174 to 176 (SAL).

This sequence belongs to the TRAFAC class translation factor GTPase superfamily. Classic translation factor GTPase family. EF-Tu/EF-1A subfamily. As to quaternary structure, monomer.

It is found in the cytoplasm. It carries out the reaction GTP + H2O = GDP + phosphate + H(+). Functionally, GTP hydrolase that promotes the GTP-dependent binding of aminoacyl-tRNA to the A-site of ribosomes during protein biosynthesis. The sequence is that of Elongation factor Tu from Alteromonas mediterranea (strain DSM 17117 / CIP 110805 / LMG 28347 / Deep ecotype).